A 179-amino-acid polypeptide reads, in one-letter code: M-phase-specific PLK1-interacting protein (179 aa).

The tract at residues 1 to 135 (MQRQNFRPPT…RVREKRMSNE (135 aa)) is disordered. Arg-37 carries the post-translational modification Asymmetric dimethylarginine. Phosphoserine is present on residues Ser-40 and Ser-47. Thr-51 is subject to Phosphothreonine. Residue Arg-57 is modified to Omega-N-methylarginine. An asymmetric dimethylarginine mark is found at Arg-59 and Arg-68. Residues 60 to 71 (PYGSSHSPRHGG) show a composition bias toward low complexity. Position 72 is a phosphoserine (Ser-72). Arg-77 bears the Asymmetric dimethylarginine mark. The segment covering 79–109 (GSPSPGGYPGSYSRSPAGSQQQFGYSPGQQQ) has biased composition (low complexity). Phosphoserine occurs at positions 80, 82, 93, 104, and 115. The span at 110–122 (THPQGSPRTSTPF) shows a compositional bias: polar residues. The residue at position 117 (Arg-117) is an Omega-N-methylarginine. The residue at position 120 (Thr-120) is a Phosphothreonine. Residues Ser-124 and Ser-133 each carry the phosphoserine modification.

Interacts with PLK1; phosphorylation-dependent. Post-translationally, phosphorylated during mitosis in the cell cycle probably by CDK1. As to expression, expressed at highest levels in liver and kidney; intermediate expression in skeletal muscle, pancreas, heart and placenta; low expression in brain and lung. Expressed in epidermis and hair follicles.

The protein resides in the nucleus. It localises to the cytoplasm. It is found in the cytoskeleton. Its subcellular location is the microtubule organizing center. The protein localises to the centrosome. Its function is as follows. May play a role in maintenance of cell cycle integrity by regulating mitosis or cytokinesis. This chain is M-phase-specific PLK1-interacting protein (MPLKIP), found in Homo sapiens (Human).